The chain runs to 262 residues: 4-hydroxy-tetrahydrodipicolinate reductase (262 aa).

9 to 14 (GCLGRM) provides a ligand contact to NAD(+). Arg36 provides a ligand contact to NADP(+). NAD(+)-binding positions include 100 to 102 (GTT) and 121 to 124 (SANM). The active-site Proton donor/acceptor is His154. His155 contacts (S)-2,3,4,5-tetrahydrodipicolinate. The Proton donor role is filled by Lys158. 164 to 165 (GT) is a (S)-2,3,4,5-tetrahydrodipicolinate binding site.

The protein belongs to the DapB family.

Its subcellular location is the cytoplasm. It catalyses the reaction (S)-2,3,4,5-tetrahydrodipicolinate + NAD(+) + H2O = (2S,4S)-4-hydroxy-2,3,4,5-tetrahydrodipicolinate + NADH + H(+). The catalysed reaction is (S)-2,3,4,5-tetrahydrodipicolinate + NADP(+) + H2O = (2S,4S)-4-hydroxy-2,3,4,5-tetrahydrodipicolinate + NADPH + H(+). It participates in amino-acid biosynthesis; L-lysine biosynthesis via DAP pathway; (S)-tetrahydrodipicolinate from L-aspartate: step 4/4. In terms of biological role, catalyzes the conversion of 4-hydroxy-tetrahydrodipicolinate (HTPA) to tetrahydrodipicolinate. The polypeptide is 4-hydroxy-tetrahydrodipicolinate reductase (Wolbachia pipientis subsp. Culex pipiens (strain wPip)).